Reading from the N-terminus, the 634-residue chain is Probable potassium transport system protein Kup 2 (634 aa).

12 helical membrane-spanning segments follow: residues 20–40 (FWTL…TSPL), 64–84 (VLSL…VLLI), 110–130 (FAAI…DAII), 148–168 (PGFD…LFLV), 174–194 (AAVA…MAVA), 224–244 (AGLL…ALYA), 258–278 (WLVL…AMLL), 290–310 (LLFP…ATII), 348–368 (IYIP…VFAF), 377–397 (AYGI…FFVM), 405–425 (AAVA…FLMA), and 430–450 (IVDG…VMVT).

Belongs to the HAK/KUP transporter (TC 2.A.72) family.

It is found in the cell inner membrane. It carries out the reaction K(+)(in) + H(+)(in) = K(+)(out) + H(+)(out). Its function is as follows. Transport of potassium into the cell. Likely operates as a K(+):H(+) symporter. This chain is Probable potassium transport system protein Kup 2, found in Rhodopseudomonas palustris (strain ATCC BAA-98 / CGA009).